The chain runs to 154 residues: Ribosomal RNA large subunit methyltransferase H (154 aa).

Glycine 103 is a binding site for S-adenosyl-L-methionine.

Belongs to the RNA methyltransferase RlmH family. In terms of assembly, homodimer.

The protein resides in the cytoplasm. The catalysed reaction is pseudouridine(1915) in 23S rRNA + S-adenosyl-L-methionine = N(3)-methylpseudouridine(1915) in 23S rRNA + S-adenosyl-L-homocysteine + H(+). Its function is as follows. Specifically methylates the pseudouridine at position 1915 (m3Psi1915) in 23S rRNA. This Gemmatimonas aurantiaca (strain DSM 14586 / JCM 11422 / NBRC 100505 / T-27) protein is Ribosomal RNA large subunit methyltransferase H.